The following is a 129-amino-acid chain: Glycine cleavage system H protein (129 aa).

Positions 23–104 (TVTVGITQHA…SYSAWLFKLK (82 aa)) constitute a Lipoyl-binding domain. Lys64 is subject to N6-lipoyllysine.

It belongs to the GcvH family. The glycine cleavage system is composed of four proteins: P, T, L and H. It depends on (R)-lipoate as a cofactor.

The glycine cleavage system catalyzes the degradation of glycine. The H protein shuttles the methylamine group of glycine from the P protein to the T protein. The sequence is that of Glycine cleavage system H protein from Nitrosomonas eutropha (strain DSM 101675 / C91 / Nm57).